The primary structure comprises 535 residues: Large neutral amino acids transporter small subunit 2 (535 aa).

Residues 1–17 (MEEGARHRNNTEKKHPG) are compositionally biased toward basic and acidic residues. The interval 1 to 30 (MEEGARHRNNTEKKHPGGGESDASPEAGSG) is disordered. The Cytoplasmic portion of the chain corresponds to 1-44 (MEEGARHRNNTEKKHPGGGESDASPEAGSGGGGVALKKEIGLVS). Residue Ser29 is modified to Phosphoserine. A helical transmembrane segment spans residues 45–65 (ACGIIVGNIIGSGIFVSPKGV). Ile53 provides a ligand contact to L-leucine. Topologically, residues 66-73 (LENAGSVG) are extracellular. The chain crosses the membrane as a helical span at residues 74-95 (LALIVWIVTGFITVVGALCYAE). Over 96–116 (LGVTIPKSGGDYSYVKDIFGG) the chain is Cytoplasmic. Residues 117–149 (LAGFLRLWIAVLVIYPTNQAVIALTFSNYVLQP) form a helical membrane-spanning segment. L-tryptophan is bound at residue Asn134. At 150–157 (LFPTCFPP) the chain is on the extracellular side. The helical transmembrane segment at 158 to 178 (ESGLRLLAAICLLLLTWVNCS) threads the bilayer. At 179–181 (SVR) the chain is on the cytoplasmic side. The chain crosses the membrane as a helical span at residues 182 to 210 (WATRVQDIFTAGKLLALALIIIMGIVQIC). Over 211-230 (KGEYFWLEPKNAFENFQEPD) the chain is Extracellular. A helical membrane pass occupies residues 231–252 (IGLVALAFLQGSFAYGGWNFLN). Gly246 contributes to the L-leucine binding site. At 253–265 (YVTEELVDPYKNL) the chain is on the cytoplasmic side. Residues 266–287 (PRAIFISIPLVTFVYVFANVAY) form a helical membrane-spanning segment. Over 288–312 (VTAMSPQELLASNAVAVTFGEKLLG) the chain is Extracellular. Residues 313–338 (VMAWIMPISVALSTFGGVNGSLFTSS) form a helical membrane-spanning segment. The Cytoplasmic portion of the chain corresponds to 339–364 (RLFFAGAREGHLPSVLAMIHVKRCTP). Residues 365–382 (IPALLFTCISTLLMLVTS) form a helical membrane-spanning segment. Over 383–386 (DMYT) the chain is Extracellular. A helical membrane pass occupies residues 387-408 (LINYVGFINYLFYGVTVAGQIV). Asn395 serves as a coordination point for L-tryptophan. Residues 409–423 (LRWKKPDIPRPIKIN) lie on the Cytoplasmic side of the membrane. A run of 2 helical transmembrane segments spans residues 424–446 (LLFP…WSEP) and 447–466 (VVCG…YFLG). Residues 467-535 (VYWQHKPKCF…DKDVAGQPQP (69 aa)) are Cytoplasmic-facing. The segment at 502-535 (SGTEEANEDMEEQQQPMYQPTPTKDKDVAGQPQP) is disordered. Positions 514-523 (QQQPMYQPTP) are enriched in polar residues.

The protein belongs to the amino acid-polyamine-organocation (APC) superfamily. L-type amino acid transporter (LAT) (TC 2.A.3.8) family. In terms of assembly, disulfide-linked heterodimer composed of the catalytic light chain subunit SLC7A8 and the heavy chain subunit SLC3A2. SLC3A2 acts as chaperones for correct plasma membrane trafficking and stabilization of SLC7A8 and modulates the substrate affinity and specificity of SLC7A8. ICAM-1 associates with the heterodimer SLC3A2/SLC7A8; this interaction regulates SLC7A8 activity. Strongest expression is observed in kidney and moderate expression in placenta and brain, followed by liver, prostate, testis, ovary, lymph node, thymus, spleen, skeletal muscle and heart. Also expressed in fetal liver as well as in the retinal pigment epithelial cell line ARPE-19 and the intestinal epithelial cell line Caco-2.

It is found in the cell membrane. Its subcellular location is the basolateral cell membrane. It catalyses the reaction L-histidine(in) + L-phenylalanine(out) = L-histidine(out) + L-phenylalanine(in). It carries out the reaction L-tryptophan(in) + L-phenylalanine(out) = L-tryptophan(out) + L-phenylalanine(in). The catalysed reaction is L-isoleucine(in) + L-phenylalanine(out) = L-isoleucine(out) + L-phenylalanine(in). The enzyme catalyses L-valine(in) + L-phenylalanine(out) = L-valine(out) + L-phenylalanine(in). It catalyses the reaction L-leucine(in) + L-phenylalanine(out) = L-leucine(out) + L-phenylalanine(in). It carries out the reaction L-glutamine(in) + L-phenylalanine(out) = L-glutamine(out) + L-phenylalanine(in). The catalysed reaction is L-cysteine(in) + L-phenylalanine(out) = L-cysteine(out) + L-phenylalanine(in). The enzyme catalyses L-phenylalanine(out) + L-methionine(in) = L-phenylalanine(in) + L-methionine(out). It catalyses the reaction L-leucine(out) + L-methionine(in) = L-leucine(in) + L-methionine(out). It carries out the reaction L-cysteine(out) + L-methionine(in) = L-cysteine(in) + L-methionine(out). The catalysed reaction is S-methylmercury-L-cysteine(out) + L-methionine(in) = S-methylmercury-L-cysteine(in) + L-methionine(out). The enzyme catalyses S-methylmercury-L-cysteine(in) + L-leucine(out) = S-methylmercury-L-cysteine(out) + L-leucine(in). It catalyses the reaction S-methylmercury-L-cysteine(in) + L-phenylalanine(out) = S-methylmercury-L-cysteine(out) + L-phenylalanine(in). It carries out the reaction L-phenylalanine(out) + L-serine(in) = L-phenylalanine(in) + L-serine(out). The catalysed reaction is L-phenylalanine(out) + glycine(in) = L-phenylalanine(in) + glycine(out). The enzyme catalyses L-phenylalanine(out) + L-alanine(in) = L-phenylalanine(in) + L-alanine(out). It catalyses the reaction 3,3'-diiodo-L-thyronine(out) = 3,3'-diiodo-L-thyronine(in). It carries out the reaction 3,3',5-triiodo-L-thyronine(out) = 3,3',5-triiodo-L-thyronine(in). The catalysed reaction is L-dopa(out) + L-phenylalanine(in) = L-dopa(in) + L-phenylalanine(out). Its activity is regulated as follows. Inhibited by the L-type inhibitor 2-Aminobicyclo-(2,2,1)-heptane-2-carboxylic acid (BCH). In terms of biological role, associates with SLC3A2 to form a functional heterodimeric complex that translocates small and large neutral amino acids with broad specificity and a stoichiometry of 1:1. Functions as amino acid antiporter mediating the influx of extracellular essential amino acids mainly in exchange with the efflux of highly concentrated intracellular amino acids. Has relatively symmetrical selectivities but strongly asymmetrical substrate affinities at both the intracellular and extracellular sides of the transporter. This asymmetry allows SLC7A8 to regulate intracellular amino acid pools (mM concentrations) by exchange with external amino acids (uM concentration range), equilibrating the relative concentrations of different amino acids across the plasma membrane instead of mediating their net uptake. May play an essential role in the reabsorption of neutral amino acids from the epithelial cells to the bloodstream in the kidney. Involved in the uptake of methylmercury (MeHg) when administered as the L-cysteine or D,L-homocysteine complexes, and hence plays a role in metal ion homeostasis and toxicity. Involved in the cellular activity of small molecular weight nitrosothiols, via the stereoselective transport of L-nitrosocysteine (L-CNSO) across the transmembrane. Imports the thyroid hormone diiodothyronine (T2) and to a smaller extent triiodothyronine (T3) but not rT 3 or thyroxine (T4). Mediates the uptake of L-DOPA. May participate in auditory function. In Homo sapiens (Human), this protein is Large neutral amino acids transporter small subunit 2.